Reading from the N-terminus, the 264-residue chain is Hydroxyethylthiazole kinase (264 aa).

Residue Met55 participates in substrate binding. Residues Arg130 and Ser176 each contribute to the ATP site. Gly203 serves as a coordination point for substrate.

This sequence belongs to the Thz kinase family. Mg(2+) is required as a cofactor.

The catalysed reaction is 5-(2-hydroxyethyl)-4-methylthiazole + ATP = 4-methyl-5-(2-phosphooxyethyl)-thiazole + ADP + H(+). Its pathway is cofactor biosynthesis; thiamine diphosphate biosynthesis; 4-methyl-5-(2-phosphoethyl)-thiazole from 5-(2-hydroxyethyl)-4-methylthiazole: step 1/1. Catalyzes the phosphorylation of the hydroxyl group of 4-methyl-5-beta-hydroxyethylthiazole (THZ). In Leptospira borgpetersenii serovar Hardjo-bovis (strain JB197), this protein is Hydroxyethylthiazole kinase.